The chain runs to 150 residues: Avidin-related protein 4/5 (150 aa).

An N-terminal signal peptide occupies residues 1–24 (MVHTTSPLLLLLLLSLALVAPSLS). Residues 26-147 (RKCSLTGKWT…GYNNFTRLCT (122 aa)) form the Avidin-like domain. C28 and C105 form a disulfide bridge. 5 residues coordinate biotin: N36, S40, Y57, T59, and D63. 2 N-linked (GlcNAc...) asparagine glycosylation sites follow: N67 and N93. Residues S95 and N140 each contribute to the biotin site. Residue N141 is glycosylated (N-linked (GlcNAc...) asparagine).

It belongs to the avidin/streptavidin family. Homotetramer.

It localises to the secreted. Functionally, forms a strong non-covalent specific complex with biotin. The chain is Avidin-related protein 4/5 (AVR4) from Gallus gallus (Chicken).